The sequence spans 668 residues: DNA ligase (668 aa).

NAD(+) is bound by residues 35-39 and 83-84; these read DKEYD and SL. The N6-AMP-lysine intermediate role is filled by K125. NAD(+)-binding residues include R147, E181, and K317. The Zn(2+) site is built by C410, C413, C426, and C432. Residues 591–668 enclose the BRCT domain; it reads KKDNKFNGKT…TEEEFNEMIN (78 aa).

It belongs to the NAD-dependent DNA ligase family. LigA subfamily. Requires Mg(2+) as cofactor. Mn(2+) serves as cofactor.

It carries out the reaction NAD(+) + (deoxyribonucleotide)n-3'-hydroxyl + 5'-phospho-(deoxyribonucleotide)m = (deoxyribonucleotide)n+m + AMP + beta-nicotinamide D-nucleotide.. In terms of biological role, DNA ligase that catalyzes the formation of phosphodiester linkages between 5'-phosphoryl and 3'-hydroxyl groups in double-stranded DNA using NAD as a coenzyme and as the energy source for the reaction. It is essential for DNA replication and repair of damaged DNA. The chain is DNA ligase from Clostridium tetani (strain Massachusetts / E88).